The following is a 260-amino-acid chain: Na(+)-translocating NADH-quinone reductase subunit C (260 aa).

Residues 12–32 form a helical membrane-spanning segment; it reads LLVIILLSLACSIIVAGSAVL. FMN phosphoryl threonine is present on Thr226.

It belongs to the NqrC family. Composed of six subunits; NqrA, NqrB, NqrC, NqrD, NqrE and NqrF. The cofactor is FMN.

It localises to the cell inner membrane. It carries out the reaction a ubiquinone + n Na(+)(in) + NADH + H(+) = a ubiquinol + n Na(+)(out) + NAD(+). NQR complex catalyzes the reduction of ubiquinone-1 to ubiquinol by two successive reactions, coupled with the transport of Na(+) ions from the cytoplasm to the periplasm. NqrA to NqrE are probably involved in the second step, the conversion of ubisemiquinone to ubiquinol. This chain is Na(+)-translocating NADH-quinone reductase subunit C, found in Pasteurella multocida (strain Pm70).